The following is a 448-amino-acid chain: Probable glycine dehydrogenase (decarboxylating) subunit 1 (448 aa).

This sequence belongs to the GcvP family. N-terminal subunit subfamily. The glycine cleavage system is composed of four proteins: P, T, L and H. In this organism, the P 'protein' is a heterodimer of two subunits.

It carries out the reaction N(6)-[(R)-lipoyl]-L-lysyl-[glycine-cleavage complex H protein] + glycine + H(+) = N(6)-[(R)-S(8)-aminomethyldihydrolipoyl]-L-lysyl-[glycine-cleavage complex H protein] + CO2. The glycine cleavage system catalyzes the degradation of glycine. The P protein binds the alpha-amino group of glycine through its pyridoxal phosphate cofactor; CO(2) is released and the remaining methylamine moiety is then transferred to the lipoamide cofactor of the H protein. This is Probable glycine dehydrogenase (decarboxylating) subunit 1 from Staphylococcus aureus (strain USA300).